We begin with the raw amino-acid sequence, 435 residues long: Protein SUPPRESSOR OF K(+) TRANSPORT GROWTH DEFECT 1 (435 aa).

Positions 7 to 72 (EQAIEYVKQA…LRRAEEIRAV (66 aa)) constitute an MIT domain. Positions 73–113 (LDEGGSGPGSNGDAAVATRPKTKPKDGEGGGKDGEDPEQSK) are disordered. Residues 95–113 (KPKDGEGGGKDGEDPEQSK) show a composition bias toward basic and acidic residues. 172–179 (GPPGTGKS) provides a ligand contact to ATP.

This sequence belongs to the AAA ATPase family. As to quaternary structure, monomer or homodimer (in nucleotide-free form). Decamer, dodecamer or tetradecamer of two stacked respective homooligomeric rings (when bound to ATP); the dodecameric form seems to be predominant. Interacts with members of the ESCRT-III subcomplex such as LIP5, VPS60-1, VPS2.1, VPS20.1, VPS20.2, VPS24-1, VPS32.1, VPS32.2, CHMP1A and VPS24. Binds to PROS/At4g24370. In terms of tissue distribution, mostly expressed in leaves, to a lower extent in seeds, and barely in roots and flowers (at protein level). Particularly expressed in trichomes.

The protein localises to the cytoplasm. It localises to the nucleus. Its subcellular location is the endosome. It is found in the multivesicular body membrane. The protein resides in the prevacuolar compartment membrane. The enzyme catalyses ATP + H2O = ADP + phosphate + H(+). Its activity is regulated as follows. Activated by LIP5 and PROS. Its function is as follows. Involved in the transport of biosynthetic membrane proteins from the prevacuolar/endosomal compartment to the vacuole. Required for multivesicular body (MVB) protein sorting. Catalyzes the ATP-dependent dissociation of class E VPS proteins from endosomal membranes, such as the disassembly of the ESCRT-III complex. May also regulate cell cycle. Required during seed development for the formation of mucilage in seed coat and testa. Involved in the maintenance of Na(+)/K(+) homeostasis under salt stress. Required for cell expansion. The polypeptide is Protein SUPPRESSOR OF K(+) TRANSPORT GROWTH DEFECT 1 (Arabidopsis thaliana (Mouse-ear cress)).